The sequence spans 128 residues: uncharacterized protein (128 aa).

High expression in pituitary gland and weak in pancreas.

This is an uncharacterized protein from Homo sapiens (Human).